Here is a 428-residue protein sequence, read N- to C-terminus: GTPase HflX (428 aa).

The Hflx-type G domain occupies 214 to 374 (PVVAIVGYTN…AIERELFKET (161 aa)). Residues 220–227 (GYTNAGKS), 245–249 (FATLD), 267–270 (DTVG), 333–336 (NKID), and 352–354 (SAK) each bind GTP. Residues Ser227 and Thr247 each coordinate Mg(2+).

The protein belongs to the TRAFAC class OBG-HflX-like GTPase superfamily. HflX GTPase family. Monomer. Associates with the 50S ribosomal subunit. Mg(2+) is required as a cofactor.

The protein localises to the cytoplasm. Its function is as follows. GTPase that associates with the 50S ribosomal subunit and may have a role during protein synthesis or ribosome biogenesis. This is GTPase HflX from Caldanaerobacter subterraneus subsp. tengcongensis (strain DSM 15242 / JCM 11007 / NBRC 100824 / MB4) (Thermoanaerobacter tengcongensis).